Reading from the N-terminus, the 279-residue chain is 2-dehydro-3-deoxyphosphooctonate aldolase (279 aa).

Belongs to the KdsA family.

It is found in the cytoplasm. It catalyses the reaction D-arabinose 5-phosphate + phosphoenolpyruvate + H2O = 3-deoxy-alpha-D-manno-2-octulosonate-8-phosphate + phosphate. It participates in carbohydrate biosynthesis; 3-deoxy-D-manno-octulosonate biosynthesis; 3-deoxy-D-manno-octulosonate from D-ribulose 5-phosphate: step 2/3. The protein operates within bacterial outer membrane biogenesis; lipopolysaccharide biosynthesis. This is 2-dehydro-3-deoxyphosphooctonate aldolase from Methylobacillus flagellatus (strain ATCC 51484 / DSM 6875 / VKM B-1610 / KT).